The chain runs to 159 residues: Ubiquitin-like protein ATG12 (159 aa).

Residues M1–N40 form a disordered region. Low complexity predominate over residues N13 to P27. G159 is covalently cross-linked (Glycyl lysine isopeptide (Gly-Lys) (interchain with K-218 in ATG5)).

The protein belongs to the ATG12 family. Forms a conjugate with ATG5. Forms a thioester bond with the 'Cys-116' of ATG10. Interacts with the ATG7 C-terminal 40 amino acids domain. The ATG12-ATG5 conjugate forms a complex with several units of ATG16. The ATG12-ATG5 conjugate also associates with ATG3.

Its subcellular location is the preautophagosomal structure membrane. It is found in the cytoplasm. Ubiquitin-like protein involved in cytoplasm to vacuole transport (Cvt), autophagy vesicles formation, mitophagy, and nucleophagy. Conjugation with ATG5 through a ubiquitin-like conjugating system involving also ATG7 as an E1-like activating enzyme and ATG10 as an E2-like conjugating enzyme, is essential for its function. The ATG12-ATG5 conjugate acts as an E3-like enzyme which is required for lipidation of ATG8 and ATG8 association to the vesicle membranes. ATG12-ATG5 rearranges the ATG3 catalytic center and enhances its E2 activity. Plays a role in sexual development and perithecia formation. This is Ubiquitin-like protein ATG12 from Sordaria macrospora (strain ATCC MYA-333 / DSM 997 / K(L3346) / K-hell).